The chain runs to 594 residues: Beta-mannosyltransferase 3 (594 aa).

The Cytoplasmic portion of the chain corresponds to 1–6 (MRIRSN). The chain crosses the membrane as a helical span at residues 7-27 (VLLLSTAGALALVWFAVVFSW). Over 28–594 (DDKSIFGIPT…KDEVKDTKAK (567 aa)) the chain is Extracellular. A glycan (N-linked (GlcNAc...) asparagine) is linked at N305. Residues 512–594 (VTRGEEDRLK…KDEVKDTKAK (83 aa)) adopt a coiled-coil conformation. Basic and acidic residues predominate over residues 517-558 (EDRLKNKEKERKIEEKRKKEEERKKKEEEKKKKEEEEKKKKE). The disordered stretch occupies residues 517-564 (EDRLKNKEKERKIEEKRKKEEERKKKEEEKKKKEEEEKKKKEEEEEEE).

This sequence belongs to the BMT family.

Its subcellular location is the membrane. Functionally, beta-mannosyltransferase involved in cell wall biosynthesis. This is Beta-mannosyltransferase 3 (BMT3) from Komagataella phaffii (strain ATCC 76273 / CBS 7435 / CECT 11047 / NRRL Y-11430 / Wegner 21-1) (Yeast).